Reading from the N-terminus, the 268-residue chain is Short chain dehydrogenase/reductase dpchG (268 aa).

NADP(+) contacts are provided by Val18, Asp70, Asn97, Lys131, Tyr165, and Lys169. Tyr165 (proton acceptor) is an active-site residue. The Lowers pKa of active site Tyr role is filled by Lys169.

This sequence belongs to the short-chain dehydrogenases/reductases (SDR) family.

The protein operates within secondary metabolite biosynthesis; terpenoid biosynthesis. Its function is as follows. Short chain dehydrogenase/reductase; part of the gene cluster that mediates the biosynthesis of the diterpenoid pyrones higginsianins A and B. The first step of the pathway is the synthesis of the alpha-pyrone moiety by the polyketide synthase dpchA via condensation of one acetyl-CoA starter unit with 3 malonyl-CoA units and 2 methylations. The alpha-pyrone is then combined with geranylgeranyl pyrophosphate (GGPP) formed by the GGPP synthase dpchD through the action of the prenyltransferase dpchC to yield a linear alpha-pyrone diterpenoid. Subsequent steps in the diterpenoid pyrone biosynthetic pathway involve the decalin core formation, which is initiated by the epoxidation of the C10-C11 olefin by the FAD-dependent oxidoreductase dpchE, and is followed by a cyclization cascade catalyzed by the terpene cyclase dpchB. The short chain dehydrogenase/reductase dpchG then oxidizes the 8S hydroxy group to a ketone and the short chain dehydrogenase/reductase dpchH reduces the ketone to the 8R hydroxy group to yield higginsianin B. Finally, the FAD-dependent oxidoreductase dpchF converts higginsianin B into higginsianin A. The sequence is that of Short chain dehydrogenase/reductase dpchG from Colletotrichum higginsianum (strain IMI 349063) (Crucifer anthracnose fungus).